We begin with the raw amino-acid sequence, 736 residues long: Phosphoribosylformylglycinamidine synthase subunit PurL (736 aa).

Residue histidine 49 is part of the active site. ATP contacts are provided by tyrosine 52 and lysine 91. Glutamate 93 is a binding site for Mg(2+). Residues 94-97 (SHNH) and arginine 116 contribute to the substrate site. The active-site Proton acceptor is the histidine 95. Aspartate 117 contacts Mg(2+). Glutamine 240 provides a ligand contact to substrate. Residue aspartate 268 coordinates Mg(2+). Residue 312 to 314 (ESQ) participates in substrate binding. Residues aspartate 493 and glycine 530 each contribute to the ATP site. Asparagine 531 contacts Mg(2+). Serine 533 serves as a coordination point for substrate.

This sequence belongs to the FGAMS family. Monomer. Part of the FGAM synthase complex composed of 1 PurL, 1 PurQ and 2 PurS subunits.

It is found in the cytoplasm. The enzyme catalyses N(2)-formyl-N(1)-(5-phospho-beta-D-ribosyl)glycinamide + L-glutamine + ATP + H2O = 2-formamido-N(1)-(5-O-phospho-beta-D-ribosyl)acetamidine + L-glutamate + ADP + phosphate + H(+). The protein operates within purine metabolism; IMP biosynthesis via de novo pathway; 5-amino-1-(5-phospho-D-ribosyl)imidazole from N(2)-formyl-N(1)-(5-phospho-D-ribosyl)glycinamide: step 1/2. Its function is as follows. Part of the phosphoribosylformylglycinamidine synthase complex involved in the purines biosynthetic pathway. Catalyzes the ATP-dependent conversion of formylglycinamide ribonucleotide (FGAR) and glutamine to yield formylglycinamidine ribonucleotide (FGAM) and glutamate. The FGAM synthase complex is composed of three subunits. PurQ produces an ammonia molecule by converting glutamine to glutamate. PurL transfers the ammonia molecule to FGAR to form FGAM in an ATP-dependent manner. PurS interacts with PurQ and PurL and is thought to assist in the transfer of the ammonia molecule from PurQ to PurL. In Rhodopseudomonas palustris (strain TIE-1), this protein is Phosphoribosylformylglycinamidine synthase subunit PurL.